We begin with the raw amino-acid sequence, 480 residues long: Trigger factor (480 aa).

In terms of domain architecture, PPIase FKBP-type spans 161-249 (GDRLLITGKF…VVEVLKEQLP (89 aa)). The interval 426–480 (TEEPVEKEAEEKNEEFAIDHEVLPTKDHDAIPAAKYDDNTPKGAETEDKQEKDKD) is disordered. Residues 429–480 (PVEKEAEEKNEEFAIDHEVLPTKDHDAIPAAKYDDNTPKGAETEDKQEKDKD) are compositionally biased toward basic and acidic residues.

The protein belongs to the FKBP-type PPIase family. Tig subfamily.

Its subcellular location is the cytoplasm. The catalysed reaction is [protein]-peptidylproline (omega=180) = [protein]-peptidylproline (omega=0). In terms of biological role, involved in protein export. Acts as a chaperone by maintaining the newly synthesized protein in an open conformation. Functions as a peptidyl-prolyl cis-trans isomerase. This chain is Trigger factor, found in Rhodopirellula baltica (strain DSM 10527 / NCIMB 13988 / SH1).